The sequence spans 221 residues: MRFPRAVLFDLDGTLLDSAPDMLATVNAMLSERGLPCITLAQLRPVVSKGSRAMLAVAFAHLDAAAREALVPEFLKRYEALLGTQAQLFDGVEVMLQRLEQAGCVWGIVTNKPEYLAQLILPQLGWQQRCAVLIGGDTLAERKPHPLPLLVAADRIGVAATQCVYVGDDERDILAARAAGMPSVAALWGYRLGDDDPLSWQADVLVEQPPQLWEPAAWPQP.

Catalysis depends on Asp10, which acts as the Nucleophile. Positions 10, 12, and 168 each coordinate Mg(2+).

The protein belongs to the HAD-like hydrolase superfamily. CbbY/CbbZ/Gph/YieH family. Requires Mg(2+) as cofactor.

The enzyme catalyses 2-phosphoglycolate + H2O = glycolate + phosphate. The protein operates within organic acid metabolism; glycolate biosynthesis; glycolate from 2-phosphoglycolate: step 1/1. Specifically catalyzes the dephosphorylation of 2-phosphoglycolate. Is involved in the dissimilation of the intracellular 2-phosphoglycolate formed during the DNA repair of 3'-phosphoglycolate ends, a major class of DNA lesions induced by oxidative stress. The polypeptide is Phosphoglycolate phosphatase (Xanthomonas campestris pv. campestris (strain 8004)).